Consider the following 213-residue polypeptide: Small ribosomal subunit protein uS3 (213 aa).

In terms of domain architecture, KH type-2 spans 38–106; it reads IRKYVKKTLY…EFSIEVNEIR (69 aa).

The protein belongs to the universal ribosomal protein uS3 family. As to quaternary structure, part of the 30S ribosomal subunit. Forms a tight complex with proteins S10 and S14.

Functionally, binds the lower part of the 30S subunit head. Binds mRNA in the 70S ribosome, positioning it for translation. The protein is Small ribosomal subunit protein uS3 of Oleidesulfovibrio alaskensis (strain ATCC BAA-1058 / DSM 17464 / G20) (Desulfovibrio alaskensis).